The following is a 215-amino-acid chain: Pyridoxine/pyridoxamine 5'-phosphate oxidase (215 aa).

Residues 9–12 and Lys69 contribute to the substrate site; that span reads RRDY. FMN is bound by residues 64 to 69, 79 to 80, Lys86, and Gln108; these read RVLLLK and FS. Substrate-binding residues include Tyr126, Arg130, and Ser134. Residues 143-144 and Trp188 each bind FMN; that span reads QS. 194–196 contacts substrate; that stretch reads RLH. Arg198 provides a ligand contact to FMN.

This sequence belongs to the pyridoxamine 5'-phosphate oxidase family. In terms of assembly, homodimer. FMN is required as a cofactor.

The catalysed reaction is pyridoxamine 5'-phosphate + O2 + H2O = pyridoxal 5'-phosphate + H2O2 + NH4(+). It catalyses the reaction pyridoxine 5'-phosphate + O2 = pyridoxal 5'-phosphate + H2O2. Its pathway is cofactor metabolism; pyridoxal 5'-phosphate salvage; pyridoxal 5'-phosphate from pyridoxamine 5'-phosphate: step 1/1. The protein operates within cofactor metabolism; pyridoxal 5'-phosphate salvage; pyridoxal 5'-phosphate from pyridoxine 5'-phosphate: step 1/1. In terms of biological role, catalyzes the oxidation of either pyridoxine 5'-phosphate (PNP) or pyridoxamine 5'-phosphate (PMP) into pyridoxal 5'-phosphate (PLP). This is Pyridoxine/pyridoxamine 5'-phosphate oxidase from Ectopseudomonas mendocina (strain ymp) (Pseudomonas mendocina).